A 197-amino-acid polypeptide reads, in one-letter code: UPF0056 inner membrane protein YhgN (197 aa).

The Periplasmic portion of the chain corresponds to M1–E3. A helical membrane pass occupies residues I4–F24. Topologically, residues M25–L44 are cytoplasmic. The chain crosses the membrane as a helical span at residues L45–L65. The Periplasmic portion of the chain corresponds to S66 to T71. A helical transmembrane segment spans residues V72–A92. Topologically, residues S93–P105 are cytoplasmic. A helical transmembrane segment spans residues F106–L126. Topologically, residues L127 to L138 are periplasmic. A helical transmembrane segment spans residues V139–F159. Over L160 to R173 the chain is Cytoplasmic. A helical membrane pass occupies residues L174–W194. At M195 to G197 the chain is on the periplasmic side.

It belongs to the UPF0056 (MarC) family.

It is found in the cell inner membrane. The polypeptide is UPF0056 inner membrane protein YhgN (yhgN) (Escherichia coli O157:H7).